The primary structure comprises 496 residues: Fizzy-related protein homolog (496 aa).

Disordered stretches follow at residues 28-51 (RRTLTPASSPVSSPSKHGDRFIPS), 64-88 (INENEKSPSQNRKAKDATSDNGKDG), and 105-166 (EKVQ…SPRK). Thr32 carries the phosphothreonine modification. The segment covering 32–42 (TPASSPVSSPS) has biased composition (polar residues). Ser36 is modified (phosphoserine). Residues 47–52 (RFIPSR) form an involved in APC/FZR1 E3 ubiquitin-protein ligase complex activity region. The residue at position 69 (Lys69) is an N6-acetyllysine. Composition is skewed to basic and acidic residues over residues 76 to 86 (KAKDATSDNGK) and 106 to 126 (KVQDPQTEDRRLQPSTPEKKG). 4 positions are modified to phosphoserine: Ser133, Ser138, Ser146, and Ser151. Residues 146-160 (SPYSLSPVSNKSQKL) show a composition bias toward polar residues. At Lys159 the chain carries N6-acetyllysine. WD repeat units follow at residues 182-222 (PELQ…VTRL), 227-266 (VEGDSVTSVGWSERGNLVAVGTHKGFVQIWDAAAGKKLSM), 269-306 (GHTARVGALAWNAEQLSSGSRDRMILQRDIRTPPLQSE), 311-350 (GHRQEVCGLKWSTDHQLLASGGNDNKLLVWNHSSLSPVQQ), 353-395 (EHLA…PLQC), 397-438 (DTGS…QVAK), and 441-480 (GHSYRVLYLAMSPDGEAIVTGAGDETLRFWNVFSKTRSTK).

The protein belongs to the WD repeat CDC20/Fizzy family. As to quaternary structure, the unphosphorylated form interacts with APC/C during mitosis. Interacts with NINL. Interacts (in complex with the anaphase promoting complex APC) with MAD2L2; inhibits FZR1-mediated APC/C activation. Interacts with SIRT2 and USP37. Interacts (via WD repeats) with MAK. Interacts with RBBP8/CtIP; this interaction leads to RBBP8 proteasomal degradation. Interacts with HECW2. Interacts with SASS6; the interaction is regulated by CENATAC and leads to SASS6 proteasomal degradation. Interacts (via N-terminus) with CCNF. Interacts with CDC6. Interacts with TK1 (via the KEN box). Acetylated. Deacetylated by SIRT2 at Lys-69 and Lys-159; deacetylation enhances the interaction of FZR1 with CDC27, leading to activation of anaphase promoting complex/cyclosome (APC/C). Post-translationally, following DNA damage, it is dephosphorylated by CDC14B in G2 phase, leading to its reassociation with the APC/C, and allowing an efficient G2 DNA damage checkpoint. Phosphorylated by MAK. In terms of processing, ubiquitinated by the SCF(CCNF) E3 ubiquitin-protein ligase complex; leading to its degradation by the proteasome. As to expression, isoform 2 is expressed at high levels in heart, liver, spleen and some cancer cell lines whereas isoform 3 is expressed only at low levels in these tissues.

The protein resides in the nucleus. The protein localises to the cytoplasm. Its pathway is protein modification; protein ubiquitination. Functionally, substrate-specific adapter for the anaphase promoting complex/cyclosome (APC/C) E3 ubiquitin-protein ligase complex. Associates with the APC/C in late mitosis, in replacement of CDC20, and activates the APC/C during anaphase and telophase. The APC/C remains active in degrading substrates to ensure that positive regulators of the cell cycle do not accumulate prematurely. At the G1/S transition FZR1 is phosphorylated, leading to its dissociation from the APC/C. Following DNA damage, it is required for the G2 DNA damage checkpoint: its dephosphorylation and reassociation with the APC/C leads to the ubiquitination of PLK1, preventing entry into mitosis. Acts as an adapter for APC/C to target the DNA-end resection factor RBBP8/CtIP for ubiquitination and subsequent proteasomal degradation. Through the regulation of RBBP8/CtIP protein turnover, may play a role in DNA damage response, favoring DNA double-strand repair through error-prone non-homologous end joining (NHEJ) over error-free, RBBP8-mediated homologous recombination (HR). The sequence is that of Fizzy-related protein homolog from Homo sapiens (Human).